The primary structure comprises 491 residues: 2-aminomuconic 6-semialdehyde dehydrogenase (491 aa).

Catalysis depends on residues glutamate 252 and cysteine 286.

It belongs to the aldehyde dehydrogenase family. Homotrimer.

It catalyses the reaction 2-aminomuconate 6-semialdehyde + NAD(+) + H2O = (2Z,4E)-2-aminomuconate + NADH + 2 H(+). Strongly inhibited by Ag(+) and Hg(+), and comnpletely inhibited by p-chloromercuribenzoic acid. Its function is as follows. Involved in the modified meta-cleavage pathway for 2-aminophenol catabolism. The enzyme is also active toward 2-hydroxymuconic 6-semialdehyde, acetaldehyde, propionaldehyde, and butyraldehyde. This Pseudomonas sp protein is 2-aminomuconic 6-semialdehyde dehydrogenase (amnC).